Here is a 360-residue protein sequence, read N- to C-terminus: Membrane-bound lytic murein transglycosylase C (360 aa).

A signal peptide spans 1-16; that stretch reads MKKFFALALVAPLLIS. The N-palmitoyl cysteine moiety is linked to residue Cys-17. Cys-17 is lipidated: S-diacylglycerol cysteine.

The protein belongs to the transglycosylase Slt family.

Its subcellular location is the cell outer membrane. The enzyme catalyses Exolytic cleavage of the (1-&gt;4)-beta-glycosidic linkage between N-acetylmuramic acid (MurNAc) and N-acetylglucosamine (GlcNAc) residues in peptidoglycan, from either the reducing or the non-reducing ends of the peptidoglycan chains, with concomitant formation of a 1,6-anhydrobond in the MurNAc residue.. Murein-degrading enzyme. May play a role in recycling of muropeptides during cell elongation and/or cell division. This Citrobacter koseri (strain ATCC BAA-895 / CDC 4225-83 / SGSC4696) protein is Membrane-bound lytic murein transglycosylase C.